The primary structure comprises 455 residues: MTISPQYIWNQVLDRLKLRLNPTAYETWIASATVQTFQDNCLVIQVENPFILNHLQKTYYSLILEEVETIVGYPIAVKLTTSQEQNLRIVDKNKDNLSSTKLQNKRQQESPKLNQLNPRYNFSRFVVGPTNRMAHAASLAVAESPGREFNPLFLCGGVGLGKTHLMQAIAYYRLELYPNANVFYVSTEQFTNDLITSIRQDSMENFREHYRTADILLVDDIQFIEGKEYTQEEFFHTFNTLHEAGKQVVIASDRPPKRIPSLQDRLVSRFSMGLIADIQVPDLETRMAILQKKAEYENIRLPRDVIEYIATNYTSNIRELEGALIRAVTYISISGLSMTVENIAPVLNPPMEQITASPEIIIQIVAENFNVSVEDLKGSSRRREISLARQIGMYLMRQHTDLSLPRIGEEFGGKDHTTVLYSCDKISKLQKKDWDLSQQLSELSDRINIASRNQN.

The interval 1-73 (MTISPQYIWN…LEEVETIVGY (73 aa)) is domain I, interacts with DnaA modulators. The domain II stretch occupies residues 73 to 114 (YPIAVKLTTSQEQNLRIVDKNKDNLSSTKLQNKRQQESPKLN). A domain III, AAA+ region region spans residues 115–331 (QLNPRYNFSR…GALIRAVTYI (217 aa)). Residues Gly159, Gly161, Lys162, and Thr163 each contribute to the ATP site. Residues 332–455 (SISGLSMTVE…RINIASRNQN (124 aa)) form a domain IV, binds dsDNA region.

It belongs to the DnaA family. As to quaternary structure, oligomerizes as a right-handed, spiral filament on DNA at oriC.

It localises to the cytoplasm. Plays an essential role in the initiation and regulation of chromosomal replication. ATP-DnaA binds to the origin of replication (oriC) to initiate formation of the DNA replication initiation complex once per cell cycle. Binds the DnaA box (a 9 base pair repeat at the origin) and separates the double-stranded (ds)DNA. Forms a right-handed helical filament on oriC DNA; dsDNA binds to the exterior of the filament while single-stranded (ss)DNA is stabiized in the filament's interior. The ATP-DnaA-oriC complex binds and stabilizes one strand of the AT-rich DNA unwinding element (DUE), permitting loading of DNA polymerase. After initiation quickly degrades to an ADP-DnaA complex that is not apt for DNA replication. Binds acidic phospholipids. This is Chromosomal replication initiator protein DnaA from Crocosphaera subtropica (strain ATCC 51142 / BH68) (Cyanothece sp. (strain ATCC 51142)).